Reading from the N-terminus, the 189-residue chain is MLLPIYLYGHPVLRKVAEDITPDYPKLKELIANMTESMYHSDGIGLAAPQIGLPIRVLVIDADPLKEDYPECAGFKRVMINAHIEERGEDLCTEYEGCLSLPAIHEKVERPTSIRIRYVDEDFQPHEEVLHGFAARVVQHEYDHIDGKLFIDHISPIRKQLIKGKLQNIIKGKVRTSYRVVTAPTGKRR.

Positions 98 and 140 each coordinate Fe cation. Residue Glu141 is part of the active site. His144 contributes to the Fe cation binding site.

The protein belongs to the polypeptide deformylase family. The cofactor is Fe(2+).

It catalyses the reaction N-terminal N-formyl-L-methionyl-[peptide] + H2O = N-terminal L-methionyl-[peptide] + formate. Functionally, removes the formyl group from the N-terminal Met of newly synthesized proteins. Requires at least a dipeptide for an efficient rate of reaction. N-terminal L-methionine is a prerequisite for activity but the enzyme has broad specificity at other positions. The polypeptide is Peptide deformylase (Porphyromonas gingivalis (strain ATCC 33277 / DSM 20709 / CIP 103683 / JCM 12257 / NCTC 11834 / 2561)).